A 247-amino-acid polypeptide reads, in one-letter code: Small ribosomal subunit protein uS3 (247 aa).

One can recognise a KH type-2 domain in the interval 18 to 87 (IDEYLAKRFY…NPQITVRRVE (70 aa)). The interval 226–247 (QQGEVVGEAPNTPLEEQGQKQG) is disordered.

This sequence belongs to the universal ribosomal protein uS3 family. In terms of assembly, part of the 30S ribosomal subunit.

Its function is as follows. Binds the lower part of the 30S subunit head. The chain is Small ribosomal subunit protein uS3 from Hyperthermus butylicus (strain DSM 5456 / JCM 9403 / PLM1-5).